The following is a 205-amino-acid chain: uncharacterized protein (205 aa).

Positions 1–19 (MKTLCVLSIFLALLGGLCT) are cleaved as a signal peptide. Residues 40–133 (VSSVASTSTP…PKTSKNNPKT (94 aa)) are compositionally biased toward low complexity. Positions 40-135 (VSSVASTSTP…TSKNNPKTQE (96 aa)) are disordered. The chain crosses the membrane as a helical span at residues 147–167 (GILYLFILLLIIFVIILICFI).

It is found in the host membrane. This is an uncharacterized protein from Equine herpesvirus 2 (strain 86/87) (EHV-2).